We begin with the raw amino-acid sequence, 480 residues long: Trigger factor (480 aa).

One can recognise a PPIase FKBP-type domain in the interval 161-249; it reads GDRLLITGKF…VVEVLKEQLP (89 aa). The tract at residues 426–480 is disordered; that stretch reads TEEPVEKEAEEKNEEFAIDHEVLPTKDHDAIPAAKYDDNTPKGAETEDKQEKDKD. Over residues 429 to 480 the composition is skewed to basic and acidic residues; that stretch reads PVEKEAEEKNEEFAIDHEVLPTKDHDAIPAAKYDDNTPKGAETEDKQEKDKD.

This sequence belongs to the FKBP-type PPIase family. Tig subfamily.

It localises to the cytoplasm. It carries out the reaction [protein]-peptidylproline (omega=180) = [protein]-peptidylproline (omega=0). In terms of biological role, involved in protein export. Acts as a chaperone by maintaining the newly synthesized protein in an open conformation. Functions as a peptidyl-prolyl cis-trans isomerase. The sequence is that of Trigger factor from Rhodopirellula baltica (strain DSM 10527 / NCIMB 13988 / SH1).